A 284-amino-acid chain; its full sequence is Pantothenate synthetase (284 aa).

30–37 provides a ligand contact to ATP; the sequence is MGNLHDGH. The Proton donor role is filled by H37. Residue Q61 participates in (R)-pantoate binding. Q61 provides a ligand contact to beta-alanine. 149 to 152 provides a ligand contact to ATP; sequence GEKD. Residue Q155 participates in (R)-pantoate binding. Residues V178 and 186 to 189 contribute to the ATP site; that span reads LSSR.

The protein belongs to the pantothenate synthetase family. Homodimer.

The protein localises to the cytoplasm. It catalyses the reaction (R)-pantoate + beta-alanine + ATP = (R)-pantothenate + AMP + diphosphate + H(+). The protein operates within cofactor biosynthesis; (R)-pantothenate biosynthesis; (R)-pantothenate from (R)-pantoate and beta-alanine: step 1/1. Its function is as follows. Catalyzes the condensation of pantoate with beta-alanine in an ATP-dependent reaction via a pantoyl-adenylate intermediate. The sequence is that of Pantothenate synthetase from Cronobacter sakazakii (strain ATCC BAA-894) (Enterobacter sakazakii).